Consider the following 187-residue polypeptide: MTFAKQSCFNSIILLSIATSYFKIGHKISELGNRIEKMTTFLIKHKASGKFLHPKGGSSNPANDTNLVLHSDIHERMYFQFDVVDERWGYIKHAASGKIVHPLGGKADPPNETKLVLHQDRHDRALFAMDFFNDNIIHKAGKYVHPKGGSTNPPNETLTVMHGDKHGAMEFIFVSPKNKDKRVLVYV.

Positions 1–37 are cleaved as a signal peptide; the sequence is MTFAKQSCFNSIILLSIATSYFKIGHKISELGNRIEK. N-acetylthreonine is present on Thr39. Residues 53 to 56, Asp64, 72 to 76, His101, Gly104, Glu112, 120 to 122, His145, Gly148, Glu156, and 164 to 166 contribute to the N-acetyl-alpha-D-galactosamine site; these read HPKG, DIHER, DRH, and DKH.

As to quaternary structure, homodimer. In terms of tissue distribution, highest expression in the posterior part of the mantle. Highly expressed in gills and to a lesser extent in mid mantle and anterior muscle. Lowest expression in digestive gland and posterior adductor muscle. Scarcely detectable in hemocytes.

Agglutination of E.coli is inhibited by alpha-galactoside melibiose, but not by beta-galactoside lactose. Functionally, alpha-D-galactose-binding lectin. Binds D-GalNAc, but not glucose or its derivatives. Has hemagglutinating activity towards rabbit erythrocytes. Agglutinates bacteria. Has bacteriostatic activity on both Gram-positive and Gram-negative bacteria including B.subtilis, S.aureus, E.coli and V.parahaemolyticus, respectively. Has a dose-dependent cytotoxic effect on the human globotriaosylceramide (Gb3)-expressing Epstein-Barr virus (EBV)-positive Burkitt's lymphoma (Raji) cell line. Has dose-dependent cytotoxic effect on another Burkitt's lymphoma (Ramos) cell line, which does not possess the EBV genome, but also expresses Gb3. Binds to Gb3 in these cells leading to phosphorylation of MEK1/2, ERK1/2, JNK and p38 kinase, activation of caspase-9/3 and to expression of p21 and tumor necrosis factor (TNF)-alpha. No cytotoxic effect on the human chronic myelogenous leukemia (K-562) cell line, which does not express Gb3. May be involved in innate immunity acting as an antibacterial or antifungal agent. May be a pattern recognition receptor (PRR) involved in recognition of glycans found on parasitic or symbiotic microorganisms. The sequence is that of Alpha-D-galactose-binding lectin from Mytilus galloprovincialis (Mediterranean mussel).